A 168-amino-acid polypeptide reads, in one-letter code: Bifunctional protein PyrR (168 aa).

Residues 36-37 (TG), R77, 94-102 (DDVLMSGRT), and V151 each bind substrate. Residues 90–102 (LVLIDDVLMSGRT) carry the PRPP-binding motif.

The protein belongs to the purine/pyrimidine phosphoribosyltransferase family. PyrR subfamily.

The catalysed reaction is UMP + diphosphate = 5-phospho-alpha-D-ribose 1-diphosphate + uracil. Its function is as follows. Regulates the transcription of the pyrimidine nucleotide (pyr) operon in response to exogenous pyrimidines. Also displays a weak uracil phosphoribosyltransferase activity which is not physiologically significant. This Pseudomonas fluorescens protein is Bifunctional protein PyrR.